A 296-amino-acid chain; its full sequence is Glycine--tRNA ligase alpha subunit (296 aa).

This sequence belongs to the class-II aminoacyl-tRNA synthetase family. As to quaternary structure, tetramer of two alpha and two beta subunits.

It localises to the cytoplasm. The enzyme catalyses tRNA(Gly) + glycine + ATP = glycyl-tRNA(Gly) + AMP + diphosphate. In Listeria innocua serovar 6a (strain ATCC BAA-680 / CLIP 11262), this protein is Glycine--tRNA ligase alpha subunit.